A 101-amino-acid chain; its full sequence is NAD(P)H-quinone oxidoreductase subunit 4L, chloroplastic (101 aa).

The next 3 membrane-spanning stretches (helical) occupy residues 2-22 (ILEHVLVLSAYLFLIGLYGLI), 32-52 (MCLELILNAVNMNFVTFSDFF), and 61-81 (IFCIFVIAIAAAEAAIGLAIV).

It belongs to the complex I subunit 4L family. In terms of assembly, NDH is composed of at least 16 different subunits, 5 of which are encoded in the nucleus.

The protein resides in the plastid. It localises to the chloroplast thylakoid membrane. It carries out the reaction a plastoquinone + NADH + (n+1) H(+)(in) = a plastoquinol + NAD(+) + n H(+)(out). The enzyme catalyses a plastoquinone + NADPH + (n+1) H(+)(in) = a plastoquinol + NADP(+) + n H(+)(out). Functionally, NDH shuttles electrons from NAD(P)H:plastoquinone, via FMN and iron-sulfur (Fe-S) centers, to quinones in the photosynthetic chain and possibly in a chloroplast respiratory chain. The immediate electron acceptor for the enzyme in this species is believed to be plastoquinone. Couples the redox reaction to proton translocation, and thus conserves the redox energy in a proton gradient. In Arabis hirsuta (Hairy rock-cress), this protein is NAD(P)H-quinone oxidoreductase subunit 4L, chloroplastic.